The following is a 216-amino-acid chain: Protein Syd (216 aa).

Belongs to the Syd family.

The protein resides in the cell inner membrane. Its function is as follows. Interacts with the SecY protein in vivo. May bind preferentially to an uncomplexed state of SecY, thus functioning either as a chelating agent for excess SecY in the cell or as a regulatory factor that negatively controls the translocase function. This is Protein Syd from Shewanella sp. (strain ANA-3).